Here is a 248-residue protein sequence, read N- to C-terminus: 2,3-bisphosphoglycerate-dependent phosphoglycerate mutase (248 aa).

Residues 9 to 16 (RHGHSEWN), 22 to 23 (TG), arginine 61, 88 to 91 (ERHY), lysine 99, 115 to 116 (RR), and 183 to 184 (GN) contribute to the substrate site. Histidine 10 acts as the Tele-phosphohistidine intermediate in catalysis. Residue glutamate 88 is the Proton donor/acceptor of the active site.

It belongs to the phosphoglycerate mutase family. BPG-dependent PGAM subfamily.

The catalysed reaction is (2R)-2-phosphoglycerate = (2R)-3-phosphoglycerate. It participates in carbohydrate degradation; glycolysis; pyruvate from D-glyceraldehyde 3-phosphate: step 3/5. Functionally, catalyzes the interconversion of 2-phosphoglycerate and 3-phosphoglycerate. The protein is 2,3-bisphosphoglycerate-dependent phosphoglycerate mutase of Arthrobacter sp. (strain FB24).